Here is a 306-residue protein sequence, read N- to C-terminus: Recombination-associated protein RdgC (306 aa).

It belongs to the RdgC family.

The protein resides in the cytoplasm. Its subcellular location is the nucleoid. May be involved in recombination. The polypeptide is Recombination-associated protein RdgC (Burkholderia ambifaria (strain MC40-6)).